We begin with the raw amino-acid sequence, 1232 residues long: Histone-lysine N-methyltransferase MECOM (1232 aa).

A disordered region spans residues 22 to 68 (PEIPLEEMPDADADGITSVPSLHIQEPCSPATSSESFTPKEGSPYKA). Acidic residues predominate over residues 25-34 (PLEEMPDADA). Residues 80 to 192 (DEFELRESTM…PGEELLLFMK (113 aa)) form the SET domain. Glycyl lysine isopeptide (Lys-Gly) (interchain with G-Cter in SUMO2) cross-links involve residues Lys-101 and Lys-192. An interaction with SUV39H1 and probably MAPK9 and SMAD3 region spans residues 191-442 (MKSEEDPHEP…NHFAAGGFFG (252 aa)). C2H2-type zinc fingers lie at residues 211–238 (HRCEDCDQLFESKAELADHQKFPCSTPH), 265–287 (QDCKECDRVFPDLQSLEKHMLSH), 293–315 (YKCDQCPKAFNWKSNLIRHQMSH), 321–344 (YECENCAKVFTDPSNLQRHIRSQH), and 350–372 (HACPECGKTFATSSGLKQHKHIH). Residue Lys-294 forms a Glycyl lysine isopeptide (Lys-Gly) (interchain with G-Cter in SUMO2) linkage. Residues Lys-369 and Lys-376 each participate in a glycyl lysine isopeptide (Lys-Gly) (interchain with G-Cter in SUMO2) cross-link. A C2H2-type 6 zinc finger spans residues 378 to 400 (FICEVCHKSYTQFSNLCRHKRMH). The segment at 407-429 (IKCKDCGQMFSTTSSLNKHRRFC) adopts a C2H2-type 7; atypical zinc-finger fold. Residues Lys-432, Lys-525, Lys-545, Lys-549, and Lys-557 each participate in a glycyl lysine isopeptide (Lys-Gly) (interchain with G-Cter in SUMO2) cross-link. The segment at 548-622 (SKHPPVGDNK…KCKENGKMFK (75 aa)) is disordered. Over residues 562–577 (LPERSSEERPLEKISD) the composition is skewed to basic and acidic residues. A compositionally biased stretch (polar residues) spans 588–600 (STPSGSDLETTSG). Over residues 608–622 (ESDKEKCKENGKMFK) the composition is skewed to basic and acidic residues. The Nuclear localization signal motif lies at 611–624 (KEKCKENGKMFKDK). Lys-624 is covalently cross-linked (Glycyl lysine isopeptide (Lys-Gly) (interchain with G-Cter in SUMO2)). Phosphoserine is present on Ser-626. Residues Lys-637, Lys-665, Lys-687, and Lys-723 each participate in a glycyl lysine isopeptide (Lys-Gly) (interchain with G-Cter in SUMO2) cross-link. Residues 720 to 823 (LPLKMEPQSP…DGSLQHARPT (104 aa)) are disordered. Position 728 is a phosphoserine (Ser-728). Glycyl lysine isopeptide (Lys-Gly) (interchain with G-Cter in SUMO2) cross-links involve residues Lys-733, Lys-734, and Lys-737. Phosphoserine is present on Ser-742. The CTBP-binding motif 1 motif lies at 743-747 (PFDLT). Residues Lys-751, Lys-754, and Lys-762 each participate in a glycyl lysine isopeptide (Lys-Gly) (interchain with G-Cter in SUMO2) cross-link. The segment covering 758–773 (SGPSKPSGTPATSQDQ) has biased composition (polar residues). Positions 774-778 (PLDLS) match the CTBP-binding motif 2 motif. Glycyl lysine isopeptide (Lys-Gly) (interchain with G-Cter in SUMO2) cross-links involve residues Lys-789, Lys-802, and Lys-803. Basic and acidic residues predominate over residues 791 to 805 (TEPRKNHVFGEKKGS). Residues 806-816 (NMDTRPSSDGS) are compositionally biased toward polar residues. Glycyl lysine isopeptide (Lys-Gly) (interchain with G-Cter in SUMO2) cross-links involve residues Lys-837, Lys-846, Lys-848, and Lys-879. C2H2-type zinc fingers lie at residues 914–936 (YTCRYCGKIFPRSANLTRHLRTH), 942–965 (YRCKYCDRSFSISSNLQRHVRNIH), and 971–993 (FKCHLCDRCFGQQTNLDRHLKKH). Lys-1020 participates in a covalent cross-link: Glycyl lysine isopeptide (Lys-Gly) (interchain with G-Cter in SUMO2). Over residues 1032–1043 (IGNSNHGSQSPR) the composition is skewed to polar residues. Residues 1032–1107 (IGNSNHGSQS…GVTRLDEEIP (76 aa)) form a disordered region. Ser-1039 and Ser-1041 each carry phosphoserine. The span at 1044–1059 (NMEERMNGSHFKDKKA) shows a compositional bias: basic and acidic residues. Residues Lys-1055 and Lys-1058 each participate in a glycyl lysine isopeptide (Lys-Gly) (interchain with G-Cter in SUMO2) cross-link. A compositionally biased stretch (acidic residues) spans 1068 to 1088 (LLDDEEVEDEVLLDEEDEDND). Over residues 1089 to 1104 (IPGKPRKELGVTRLDE) the composition is skewed to basic and acidic residues. Residues Lys-1122, Lys-1129, Lys-1134, Lys-1151, Lys-1178, and Lys-1186 each participate in a glycyl lysine isopeptide (Lys-Gly) (interchain with G-Cter in SUMO2) cross-link.

In terms of assembly, homooligomer. Interacts with CTBP1. Interacts with SMAD3 (via MH2 domain); the interaction is direct. Interacts with SMAD4; through interaction with SMAD3. Interacts with CREBBP, KAT2B and histone deacetylases. Interacts with MAPK8 and MAPK9; inhibits JNK signaling. Interacts with SUV39H1 (via SET domain); enhances MECOM transcriptional repression activity. May be acetylated by CREBBP and KAT2B.

The protein localises to the nucleus. It is found in the nucleus speckle. It localises to the cytoplasm. The catalysed reaction is L-lysyl(9)-[histone H3] + S-adenosyl-L-methionine = N(6)-methyl-L-lysyl(9)-[histone H3] + S-adenosyl-L-homocysteine + H(+). In terms of biological role, functions as a transcriptional regulator binding to DNA sequences in the promoter region of target genes and regulating positively or negatively their expression. Oncogene which plays a role in development, cell proliferation and differentiation. May also play a role in apoptosis through regulation of the JNK and TGF-beta signaling. Involved in hematopoiesis. Displays histone methyltransferase activity and monomethylates 'Lys-9' of histone H3 (H3K9me1) in vitro. Probably catalyzes the monomethylation of free histone H3 in the cytoplasm which is then transported to the nucleus and incorporated into nucleosomes where SUV39H methyltransferases use it as a substrate to catalyze histone H3 'Lys-9' trimethylation. Likely to be one of the primary histone methyltransferases along with PRDM16 that direct cytoplasmic H3K9me1 methylation. The protein is Histone-lysine N-methyltransferase MECOM of Mus musculus (Mouse).